The primary structure comprises 105 residues: uncharacterized protein (105 aa).

Residues 8–28 (FMTAGIIIALIIAVLAPFLAS) traverse the membrane as a helical segment. Residues 32–53 (DGLESTAEKVMPNPETEPVLES) are disordered. A helical transmembrane segment spans residues 72–92 (VSMVIGTILVLAIAYGVGAVF).

It to M.jannaschii MJ1570.

Its subcellular location is the cell membrane. This is an uncharacterized protein from Methanothermobacter thermautotrophicus (strain ATCC 29096 / DSM 1053 / JCM 10044 / NBRC 100330 / Delta H) (Methanobacterium thermoautotrophicum).